A 246-amino-acid polypeptide reads, in one-letter code: tRNA (guanine-N(1)-)-methyltransferase (246 aa).

S-adenosyl-L-methionine-binding positions include Gly114 and 134–139 (IGDYIL).

It belongs to the RNA methyltransferase TrmD family. In terms of assembly, homodimer.

The protein resides in the cytoplasm. The enzyme catalyses guanosine(37) in tRNA + S-adenosyl-L-methionine = N(1)-methylguanosine(37) in tRNA + S-adenosyl-L-homocysteine + H(+). Specifically methylates guanosine-37 in various tRNAs. The sequence is that of tRNA (guanine-N(1)-)-methyltransferase from Coxiella burnetii (strain CbuG_Q212) (Coxiella burnetii (strain Q212)).